A 239-amino-acid polypeptide reads, in one-letter code: Beta-glucanase (239 aa).

A signal peptide spans 1-25; it reads MKRVLLILVTGLFMSLCGITSSVSA. In terms of domain architecture, GH16 spans 26–239; it reads QTGGSFFEPF…HYDWMRYRKK (214 aa). An intrachain disulfide couples Cys57 to Cys86. Catalysis depends on Glu134, which acts as the Nucleophile.

Belongs to the glycosyl hydrolase 16 family.

It carries out the reaction Hydrolysis of (1-&gt;4)-beta-D-glucosidic linkages in beta-D-glucans containing (1-&gt;3)- and (1-&gt;4)-bonds.. This Bacillus amyloliquefaciens (Bacillus velezensis) protein is Beta-glucanase (bglA).